Consider the following 335-residue polypeptide: Tryptophan--tRNA ligase (335 aa).

ATP-binding positions include 19-21 and 28-29; these read QPS and GN. Positions 20 to 29 match the 'HIGH' region motif; that stretch reads PSSGMLHLGN. An L-tryptophan-binding site is contributed by D143. ATP-binding positions include 155-157, I192, and 201-205; these read GAD and KMSKS. Positions 201-205 match the 'KMSKS' region motif; it reads KMSKS.

Belongs to the class-I aminoacyl-tRNA synthetase family. In terms of assembly, homodimer.

The protein localises to the cytoplasm. The enzyme catalyses tRNA(Trp) + L-tryptophan + ATP = L-tryptophyl-tRNA(Trp) + AMP + diphosphate + H(+). In terms of biological role, catalyzes the attachment of tryptophan to tRNA(Trp). The chain is Tryptophan--tRNA ligase from Tropheryma whipplei (strain Twist) (Whipple's bacillus).